The sequence spans 205 residues: Probable thymidylate kinase (205 aa).

Residue 7 to 14 (GIDGAGKS) coordinates ATP.

The protein belongs to the thymidylate kinase family.

It catalyses the reaction dTMP + ATP = dTDP + ADP. This chain is Probable thymidylate kinase, found in Thermococcus kodakarensis (strain ATCC BAA-918 / JCM 12380 / KOD1) (Pyrococcus kodakaraensis (strain KOD1)).